A 191-amino-acid polypeptide reads, in one-letter code: CASP-like protein 4C3 (191 aa).

The Cytoplasmic portion of the chain corresponds to 1–29; that stretch reads METGDSAVKSSQDVHYYGKSTAQKHRRSN. The chain crosses the membrane as a helical span at residues 30-50; the sequence is GIILIFRALTFSFSLTSVIVM. The Extracellular segment spans residues 51 to 72; it reads GTNRHRIDAQSRVAWYDFDPFR. The chain crosses the membrane as a helical span at residues 73–93; sequence YVLAVNAIICIYSFVEIWLAV. Over 94-116 the chain is Cytoplasmic; sequence YTYLKDTLFLPETFQVWFDYGHD. The chain crosses the membrane as a helical span at residues 117-137; it reads QGFAYLLFSANSAGIAMAQLL. Residues 138 to 162 lie on the Extracellular side of the membrane; the sequence is QSGNSLIHGAYRCSDAGVFCTQARA. Residues 163–183 traverse the membrane as a helical segment; that stretch reads SIGLGFGAFLFLALSSLLTGL. The Cytoplasmic segment spans residues 184–191; it reads RVARWYFS.

Belongs to the Casparian strip membrane proteins (CASP) family. Homodimer and heterodimers.

Its subcellular location is the cell membrane. In Physcomitrium patens (Spreading-leaved earth moss), this protein is CASP-like protein 4C3.